Consider the following 342-residue polypeptide: Ornithine carbamoyltransferase, catabolic (342 aa).

Carbamoyl phosphate-binding positions include 59–62 (STRT), Ser-83, Arg-110, and 137–140 (HPTQ). Residues Asn-169, Asp-235, and 239–240 (SL) contribute to the L-ornithine site. Carbamoyl phosphate contacts are provided by residues 276–277 (CL) and Arg-328.

The protein belongs to the aspartate/ornithine carbamoyltransferase superfamily. OTCase family. Dodecamer (tetramer of trimers).

The protein localises to the cytoplasm. The catalysed reaction is carbamoyl phosphate + L-ornithine = L-citrulline + phosphate + H(+). The protein operates within amino-acid degradation; L-arginine degradation via ADI pathway; carbamoyl phosphate from L-arginine: step 2/2. In terms of biological role, nvolved in the catabolism of arginine. Catalyzes the phosphorolysis of citrulline, the reverse reaction of the biosynthetic one, yielding ornithine and carbamoyl phosphate which serve to generate ATP from ADP. The sequence is that of Ornithine carbamoyltransferase, catabolic (arcB) from Malacoplasma penetrans (strain HF-2) (Mycoplasma penetrans).